A 100-amino-acid polypeptide reads, in one-letter code: Large ribosomal subunit protein uL23 (100 aa).

The protein belongs to the universal ribosomal protein uL23 family. As to quaternary structure, part of the 50S ribosomal subunit. Contacts protein L29, and trigger factor when it is bound to the ribosome.

One of the early assembly proteins it binds 23S rRNA. One of the proteins that surrounds the polypeptide exit tunnel on the outside of the ribosome. Forms the main docking site for trigger factor binding to the ribosome. The polypeptide is Large ribosomal subunit protein uL23 (Mycobacterium sp. (strain JLS)).